A 1109-amino-acid chain; its full sequence is MAQTYYKIGVQSTEVNSESIFFNPEVDSSDTVAVVSAGIVVVGTILTAFASFVNPGVVLISFGTLAPVLWPDPEEDPKKIWSQFMKHGEDLLNQTISTAVKEIALAHLNGFKDVLTYYERAFNDWKRNPSANTARLVSQRFENAHFNFVSNMPQLQLPTYDTLLLSCYTEAANLHLNLLHQGVQFADQWNADQPHSPMLKSSGTYYDELLVYIEKYINYCTKTYHKGLNHLKESEKITWDAYNTYRREMTLIVLDLVATFPFYDIRRFPRGVELELTREVYTSLDHLTRPPGLFTWLSDIELYTESVAEGDYLSGIRESKYYTGNQFFTMKNIYGNTNRLSKQLITLLPGEFMTHLSINRPFQTIAGINKLYSLIQKIVFTTFKNDNEYQKNFNVNNQNEPQETTNYPNDYGGSNSQKFKHNLSHFPLIIHKLEFAEYFHSIFALGWTHNSVNSQNLISESVSTQIPLVKAYEVTNNSVIRGPGFTGGDLIELRDKCSIKCKASSLKKYAISLFYAANNAIAVSIDVGDSGAGVLLQPTFSRKGNNNFTIQDLNYKDFQYHTLLVDIELPESEEIHIHLKREDDYEEGVILLIDKLEFKPIDENYTNEMNLEKAKKAVNVLFINATNALKMDVTDYHIDQVANLVECISDDLYAKEKIKFTPCIKFAKQLSQARNLLSDPNFNNLNAENSWTANTGVTIIEGDPLYKGRAIQLSAARDENFPTYLYQKIDESLLKPYTRYQLRGFVEGSQDLELDLVRYGATDIVMNVPGDLEILSYSAPINPCEEIETRLDTTCGALDRCKQSNYVNSAADVRPDQVNGDPHAFSFHIDTGTTDNNRNLGIWIIFKIATPDGYATFGNLELIELGPLSGEALAQVQRKEQKWGKNTTQKREEAAKLYAAAKQTINQLFADSQGTKLRFDTEFSNILSADKLVYKIRDVYSEVLSVIPGLNYDLFMELENRIQNAIDLYDARNTVTNGEFRNGLANWMASSNTEVRQIQAHPCWYSLGWNAQVAQSLNVKPDHGYVLRVTAKKEGIGNGYVTILDCANHIDTLTFSSCDSGFTTSSNELAAYVTKTLEIFPDTDQIRIEIGETRSTFYVESVDLIRMED.

This sequence belongs to the delta endotoxin family.

In terms of biological role, promotes colloidosmotic lysis by binding to the midgut epithelial cells of insects. The polypeptide is Pesticidal crystal protein Cry28Aa (cry28Aa) (Bacillus thuringiensis subsp. finitimus).